The sequence spans 105 residues: Wound-induced protein 1 (105 aa).

To potato anionic peroxidase. Ubiquitous.

The sequence is that of Wound-induced protein 1 (WUN1) from Solanum tuberosum (Potato).